The chain runs to 243 residues: 3-deoxy-manno-octulosonate cytidylyltransferase (243 aa).

It belongs to the KdsB family.

The protein resides in the cytoplasm. It carries out the reaction 3-deoxy-alpha-D-manno-oct-2-ulosonate + CTP = CMP-3-deoxy-beta-D-manno-octulosonate + diphosphate. Its pathway is nucleotide-sugar biosynthesis; CMP-3-deoxy-D-manno-octulosonate biosynthesis; CMP-3-deoxy-D-manno-octulosonate from 3-deoxy-D-manno-octulosonate and CTP: step 1/1. It participates in bacterial outer membrane biogenesis; lipopolysaccharide biosynthesis. Its function is as follows. Activates KDO (a required 8-carbon sugar) for incorporation into bacterial lipopolysaccharide in Gram-negative bacteria. The sequence is that of 3-deoxy-manno-octulosonate cytidylyltransferase from Helicobacter pylori (strain P12).